Reading from the N-terminus, the 286-residue chain is Beta-lactamase SHV-46 (286 aa).

Residues 1-21 form the signal peptide; that stretch reads MRYIRLCIISLLATLPLAVHA. The active-site Acyl-ester intermediate is the S66. Cysteines 73 and 119 form a disulfide. E164 acts as the Proton acceptor in catalysis. 230-232 provides a ligand contact to substrate; sequence KTG.

This sequence belongs to the class-A beta-lactamase family.

The enzyme catalyses a beta-lactam + H2O = a substituted beta-amino acid. The protein is Beta-lactamase SHV-46 (bla) of Klebsiella oxytoca.